Here is a 108-residue protein sequence, read N- to C-terminus: uncharacterized protein (108 aa).

The protein to M.jannaschii MJ1245 and M.thermoautotrophicum MTH1110.

This is an uncharacterized protein from Methanocaldococcus jannaschii (strain ATCC 43067 / DSM 2661 / JAL-1 / JCM 10045 / NBRC 100440) (Methanococcus jannaschii).